We begin with the raw amino-acid sequence, 257 residues long: Taurine import ATP-binding protein TauB (257 aa).

An ABC transporter domain is found at 6–233 (LDKISIHYDG…RYAAGEPIRA (228 aa)). 38–45 (GRSGCGKT) serves as a coordination point for ATP.

The protein belongs to the ABC transporter superfamily. Taurine importer (TC 3.A.1.17.1) family. In terms of assembly, the complex is composed of two ATP-binding proteins (TauB), two transmembrane proteins (TauC) and a solute-binding protein (TauA).

The protein localises to the cell inner membrane. The enzyme catalyses taurine(out) + ATP + H2O = taurine(in) + ADP + phosphate + H(+). Functionally, part of the ABC transporter complex TauABC involved in taurine import. Responsible for energy coupling to the transport system. This Mesorhizobium japonicum (strain LMG 29417 / CECT 9101 / MAFF 303099) (Mesorhizobium loti (strain MAFF 303099)) protein is Taurine import ATP-binding protein TauB.